A 181-amino-acid polypeptide reads, in one-letter code: Inner membrane-spanning protein YciB (181 aa).

5 consecutive transmembrane segments (helical) span residues 10-30 (LIIF…GALI), 50-70 (MHLI…VFHD), 72-92 (AFIK…LGVS), 118-138 (VTWY…YVAF), and 148-168 (FKVF…VFYL).

This sequence belongs to the YciB family.

It is found in the cell inner membrane. In terms of biological role, plays a role in cell envelope biogenesis, maintenance of cell envelope integrity and membrane homeostasis. The chain is Inner membrane-spanning protein YciB from Shewanella sp. (strain MR-7).